The chain runs to 80 residues: Myrmicitoxin(1)-Pr1a (80 aa).

Positions 1–23 (MEIPKLLYIAVIAIGLSGSLTWA) are cleaved as a signal peptide. The propeptide occupies 24 to 57 (TPLANPLAEAEAEAKATAEATAEALAEALAEPEP). Phenylalanine amide is present on Phe79.

It belongs to the formicidae venom clade 1 family. Expressed by the venom gland.

It localises to the secreted. Vertebrate-selective toxin that causes pain by targeting voltage-gated sodium channels. This chain is Myrmicitoxin(1)-Pr1a, found in Pogonomyrmex rugosus (Desert harvester ant).